The primary structure comprises 48 residues: Disintegrin leucogastin-A (48 aa).

The 47-residue stretch at 1–47 (DCASGPCCRDCKFLEEFTICNMARGDDMNDYCNGKTCDCPRNPHKWP) folds into the Disintegrin domain. Cystine bridges form between Cys-2-Cys-11, Cys-7-Cys-32, Cys-8-Cys-37, and Cys-20-Cys-39. The Cell attachment site signature appears at 24 to 26 (RGD).

The protein belongs to the venom metalloproteinase (M12B) family. P-II subfamily. P-IIa sub-subfamily. As to quaternary structure, monomer (disintegrin). Expressed by the venom gland.

It is found in the secreted. In terms of biological role, inhibits ADP-induced human platelet aggregation. This Echis leucogaster (Roman's saw-scaled viper) protein is Disintegrin leucogastin-A.